The chain runs to 166 residues: Ribosome maturation factor RimM (166 aa).

Residues 90–165 enclose the PRC barrel domain; it reads NDNDAFSIFY…IITLKNIEGL (76 aa).

This sequence belongs to the RimM family. Binds ribosomal protein uS19.

It localises to the cytoplasm. An accessory protein needed during the final step in the assembly of 30S ribosomal subunit, possibly for assembly of the head region. Essential for efficient processing of 16S rRNA. May be needed both before and after RbfA during the maturation of 16S rRNA. It has affinity for free ribosomal 30S subunits but not for 70S ribosomes. The polypeptide is Ribosome maturation factor RimM (Mesoplasma florum (strain ATCC 33453 / NBRC 100688 / NCTC 11704 / L1) (Acholeplasma florum)).